We begin with the raw amino-acid sequence, 119 residues long: Putative arsenical resistance operon repressor ArsR2 (119 aa).

In terms of domain architecture, HTH arsR-type spans 24–119; sequence VDSDAMATDL…TLDDLRGNHE (96 aa). Positions 60–83 form a DNA-binding region, H-T-H motif; it reads VCDLEATVGVSQSAVSQALSRLYT.

Transcriptional repressor for the arsR2M operon. The polypeptide is Putative arsenical resistance operon repressor ArsR2 (arsR2) (Halobacterium salinarum (strain ATCC 700922 / JCM 11081 / NRC-1) (Halobacterium halobium)).